A 453-amino-acid polypeptide reads, in one-letter code: Cytochrome P450 monooxygenase PC-20 (453 aa).

Helical transmembrane passes span 5 to 25 (LGPF…LCVI) and 49 to 69 (LGVV…LFCV). Residue C387 participates in heme binding.

This sequence belongs to the cytochrome P450 family. It depends on heme as a cofactor.

The protein localises to the membrane. It participates in secondary metabolite biosynthesis. Its function is as follows. Cytochrome P450 monooxygenase; part of the gene cluster that mediates the biosynthesis of the indole diterpenes penitrems. The geranylgeranyl diphosphate (GGPP) synthase penG catalyzes the first step in penitrem biosynthesis via conversion of farnesyl pyrophosphate and isopentyl pyrophosphate into geranylgeranyl pyrophosphate (GGPP). Condensation of indole-3-glycerol phosphate with GGPP by the prenyl transferase penC then forms 3-geranylgeranylindole (3-GGI). Epoxidation by the FAD-dependent monooxygenase penM leads to a epoxidized-GGI that is substrate of the terpene cyclase penB for cyclization to yield paspaline. Paspaline is subsequently converted to 13-desoxypaxilline by the cytochrome P450 monooxygenase penP, the latter being then converted to paxilline by the cytochrome P450 monooxygenase penQ. Paxilline is converted to beta-paxitriol via C-10 ketoreduction by the short-chain dehydrogenase PC-15 which can be monoprenylated at the C-20 by the indole diterpene prenyltransferase penD. A two-step elimination (acetylation and elimination) process performed by the O-acetyltransferase PC-16 and the P.simplicissimum ptmI-ortholog not yet identified in P.crustosum, leads to the production of the prenylated form of penijanthine. The FAD-linked oxidoreductase ptmO then converts the prenylated form of penijanthine into PC-M5 which is in turn transformed into PC-M4 by the aromatic dimethylallyltransferase PC-22. A series of oxidation steps involving 4 cytochrome P450 monooxygenases (PC-21, PC-05, PC-23, PC-20) and a FAD-dependent monooxygenase (PC-14) are required for the transformation of PC-M4 to penitrems A and E. Synthesis of these final products is proposed to proceed via penitrems D and C (PC-21, PC-05, PC-14) and penitrems B and F (PC-21, PC-05, PC-14, PC-23). This is Cytochrome P450 monooxygenase PC-20 from Penicillium crustosum (Blue mold fungus).